The following is a 665-amino-acid chain: Protein Fe65 homolog (665 aa).

A compositionally biased stretch (basic and acidic residues) spans 1–12; sequence MREGTPRVRIEV. Disordered regions lie at residues 1-43 and 90-111; these read MREG…DTAT and SRGY…RRRN. A compositionally biased stretch (polar residues) spans 14 to 24; that stretch reads KGSNRPSQFVS. 2 stretches are compositionally biased toward basic and acidic residues: residues 27–40 and 102–111; these read EEQR…RDSD and GRREEERRRN. The WW domain maps to 233 to 266; it reads KDLPPGWEKHEDPQGYSYYWHVDSGTIQRQPPPP. 2 consecutive PID domains span residues 330–456 and 499–615; these read VRFA…RDIC and FLGV…VLDA.

As to quaternary structure, interacts (via PID 2 domain) with apl-1 (via cytoplasmic domain). Phosphorylated. As to expression, expressed in the pharynx (including pharyngeal muscle and nerve cells), ventral nerve cord and tail neurons.

Its subcellular location is the cytoplasm. The protein localises to the cytoskeleton. In terms of biological role, modulates pharyngeal pumping activity, at least in part by regulating expression of the acetylcholinesterase genes ace-1 and ace-2. The chain is Protein Fe65 homolog from Caenorhabditis elegans.